The following is a 695-amino-acid chain: Polyribonucleotide nucleotidyltransferase (695 aa).

Positions 486 and 492 each coordinate Mg(2+). The KH domain occupies 553–612; it reads PRIETMQINTSKIATVIGPGGKQIRQIIERSGAQVDINDDGVINIAASTQESINKAKELI. One can recognise an S1 motif domain in the interval 622-690; sequence GKVYNGRVTS…EKGQLKLSHK (69 aa).

It belongs to the polyribonucleotide nucleotidyltransferase family. Requires Mg(2+) as cofactor.

The protein localises to the cytoplasm. It catalyses the reaction RNA(n+1) + phosphate = RNA(n) + a ribonucleoside 5'-diphosphate. Involved in mRNA degradation. Catalyzes the phosphorolysis of single-stranded polyribonucleotides processively in the 3'- to 5'-direction. The sequence is that of Polyribonucleotide nucleotidyltransferase from Chlamydia trachomatis serovar D (strain ATCC VR-885 / DSM 19411 / UW-3/Cx).